The sequence spans 168 residues: Ribosome maturation factor RimM (168 aa).

Positions 95–168 constitute a PRC barrel domain; it reads KEGYYWSDLI…QIMVDWELDY (74 aa).

This sequence belongs to the RimM family. Binds ribosomal protein uS19.

It is found in the cytoplasm. Its function is as follows. An accessory protein needed during the final step in the assembly of 30S ribosomal subunit, possibly for assembly of the head region. Essential for efficient processing of 16S rRNA. May be needed both before and after RbfA during the maturation of 16S rRNA. It has affinity for free ribosomal 30S subunits but not for 70S ribosomes. The chain is Ribosome maturation factor RimM from Nitrosomonas eutropha (strain DSM 101675 / C91 / Nm57).